Reading from the N-terminus, the 456-residue chain is Adenylosuccinate lyase (456 aa).

N(6)-(1,2-dicarboxyethyl)-AMP-binding positions include 15-16 (RY) and 90-92 (NHD). K94 is modified (N6-acetyllysine). 122 to 123 (TS) contacts N(6)-(1,2-dicarboxyethyl)-AMP. H171 serves as the catalytic Proton donor/acceptor. Q247 lines the N(6)-(1,2-dicarboxyethyl)-AMP pocket. The active-site Proton donor/acceptor is S295. N(6)-(1,2-dicarboxyethyl)-AMP contacts are provided by residues S296, 301 to 303 (KVN), N309, R335, and 340 to 344 (STVLR). K366 carries the post-translational modification N6-acetyllysine.

The protein belongs to the lyase 1 family. Adenylosuccinate lyase subfamily. As to quaternary structure, homotetramer. Residues from neighboring subunits contribute catalytic and substrate-binding residues to each active site.

It catalyses the reaction N(6)-(1,2-dicarboxyethyl)-AMP = fumarate + AMP. The catalysed reaction is (2S)-2-[5-amino-1-(5-phospho-beta-D-ribosyl)imidazole-4-carboxamido]succinate = 5-amino-1-(5-phospho-beta-D-ribosyl)imidazole-4-carboxamide + fumarate. The protein operates within purine metabolism; AMP biosynthesis via de novo pathway; AMP from IMP: step 2/2. It functions in the pathway purine metabolism; IMP biosynthesis via de novo pathway; 5-amino-1-(5-phospho-D-ribosyl)imidazole-4-carboxamide from 5-amino-1-(5-phospho-D-ribosyl)imidazole-4-carboxylate: step 2/2. In terms of biological role, catalyzes two reactions in de novo purine nucleotide biosynthesis. Catalyzes the breakdown of 5-aminoimidazole- (N-succinylocarboxamide) ribotide (SAICAR or 2-[5-amino-1-(5-phospho-beta-D-ribosyl)imidazole-4-carboxamido]succinate) to 5-aminoimidazole-4-carboxamide ribotide (AICAR or 5-amino-1-(5-phospho-beta-D-ribosyl)imidazole-4-carboxamide) and fumarate, and of adenylosuccinate (ADS or N(6)-(1,2-dicarboxyethyl)-AMP) to adenosine monophosphate (AMP) and fumarate. The protein is Adenylosuccinate lyase (purB) of Escherichia coli O6:H1 (strain CFT073 / ATCC 700928 / UPEC).